The following is a 465-amino-acid chain: Sodium-dependent phosphate transport protein 1 (465 aa).

Asn39, Asn47, and Asn56 each carry an N-linked (GlcNAc...) asparagine glycan. 10 helical membrane passes run 79-99, 117-137, 176-196, 199-219, 260-280, 304-324, 337-356, 363-383, 399-419, and 429-449; these read GLIL…VGYL, SLMS…VIVC, FVMG…LLGW, VFYI…FLFF, LPLW…SLLV, LPYL…DFFL, LFTT…LLYL, TVIF…GQLI, VTAL…GLIL, and KIFF…FLFA.

This sequence belongs to the major facilitator superfamily. Sodium/anion cotransporter family. In terms of assembly, interacts with PDZK1. Kidney.

It is found in the apical cell membrane. It catalyses the reaction 3 Na(+)(out) + phosphate(out) = 3 Na(+)(in) + phosphate(in). It carries out the reaction urate(out) = urate(in). Functionally, important for the resorption of phosphate by the kidney. May be involved in actively transporting phosphate into cells via Na(+) cotransport in the renal brush border membrane. Plays a role in urate transport in the kidney. The polypeptide is Sodium-dependent phosphate transport protein 1 (Slc17a1) (Mus musculus (Mouse)).